The primary structure comprises 200 residues: Probable GTP-binding protein EngB (200 aa).

The region spanning 24–198 (EGMEVAFAGR…QAQLDEWLGI (175 aa)) is the EngB-type G domain. GTP is bound by residues 32 to 39 (GRSNVGKS), 59 to 63 (GRTQM), 77 to 80 (DLPG), 144 to 147 (TKSD), and 177 to 179 (FSA). Residues Ser-39 and Thr-61 each coordinate Mg(2+).

The protein belongs to the TRAFAC class TrmE-Era-EngA-EngB-Septin-like GTPase superfamily. EngB GTPase family. It depends on Mg(2+) as a cofactor.

In terms of biological role, necessary for normal cell division and for the maintenance of normal septation. This is Probable GTP-binding protein EngB from Nitrosococcus oceani (strain ATCC 19707 / BCRC 17464 / JCM 30415 / NCIMB 11848 / C-107).